The sequence spans 411 residues: Exodeoxyribonuclease 7 large subunit (411 aa).

This sequence belongs to the XseA family. Heterooligomer composed of large and small subunits.

It is found in the cytoplasm. It carries out the reaction Exonucleolytic cleavage in either 5'- to 3'- or 3'- to 5'-direction to yield nucleoside 5'-phosphates.. Its function is as follows. Bidirectionally degrades single-stranded DNA into large acid-insoluble oligonucleotides, which are then degraded further into small acid-soluble oligonucleotides. This Mycobacterium sp. (strain JLS) protein is Exodeoxyribonuclease 7 large subunit.